We begin with the raw amino-acid sequence, 207 residues long: High frequency lysogenization protein HflD homolog (207 aa).

This sequence belongs to the HflD family.

It is found in the cytoplasm. The protein localises to the cell inner membrane. This Cellvibrio japonicus (strain Ueda107) (Pseudomonas fluorescens subsp. cellulosa) protein is High frequency lysogenization protein HflD homolog.